The chain runs to 263 residues: Acetylglutamate kinase (263 aa).

Substrate-binding positions include 48-49, arginine 70, and asparagine 162; that span reads GG.

The protein belongs to the acetylglutamate kinase family. ArgB subfamily.

It localises to the cytoplasm. It catalyses the reaction N-acetyl-L-glutamate + ATP = N-acetyl-L-glutamyl 5-phosphate + ADP. Its pathway is amino-acid biosynthesis; L-arginine biosynthesis; N(2)-acetyl-L-ornithine from L-glutamate: step 2/4. Its function is as follows. Catalyzes the ATP-dependent phosphorylation of N-acetyl-L-glutamate. This Vibrio parahaemolyticus serotype O3:K6 (strain RIMD 2210633) protein is Acetylglutamate kinase.